A 442-amino-acid chain; its full sequence is Glutamate synthase large subunit-like protein (442 aa).

Positions 108 to 133 are disordered; sequence LGRGATASGTSTTTGDGGMTDEERGH. Positions 109–121 are enriched in low complexity; sequence GRGATASGTSTTT.

The protein belongs to the glutamate synthase family.

This is Glutamate synthase large subunit-like protein (glxD) from Rhizobium meliloti (strain 1021) (Ensifer meliloti).